Reading from the N-terminus, the 299-residue chain is UPF0603 protein OsI_019212, chloroplastic (299 aa).

2 stretches are compositionally biased toward low complexity: residues 1–14 (METL…LSPL) and 22–36 (ASPA…SSPA). The transit peptide at 1–41 (METLLSPSTLLSPLRGSKKKPASPAASASSSSSSPARSVVS) directs the protein to the chloroplast. Disordered regions lie at residues 1-60 (METL…WRGD) and 244-265 (PDPG…TKEE). A thylakoid-targeting transit peptide spans 42 to 98 (CALRRQQPPPQAVAAWRGDGGRGGGVGSWATFLQHGLAAAALSLAISMAPAPAPAVA). Residues 252-265 (KDNKRESNFKTKEE) are compositionally biased toward basic and acidic residues. A helical membrane pass occupies residues 276–296 (VVGGLLVIAFVVPMAQYYAYI).

This sequence belongs to the UPF0603 family.

The protein resides in the plastid. Its subcellular location is the chloroplast thylakoid membrane. The polypeptide is UPF0603 protein OsI_019212, chloroplastic (Oryza sativa subsp. indica (Rice)).